The sequence spans 250 residues: ATP synthase subunit a (250 aa).

The next 6 membrane-spanning stretches (helical) occupy residues 26-46 (FTNASLFMVATVGAAAGFLYL), 84-104 (FFPMVFSLFMFILTANLLGMV), 114-134 (IIVTFALAVFVIGTVILYGFY), 143-163 (LFVPHGVPGALLPLVVAIEII), 193-213 (FVASLSAFGALGIGGAILPLI), and 216-236 (VALTGLEFLVAFLQAYVFAVL).

This sequence belongs to the ATPase A chain family. In terms of assembly, F-type ATPases have 2 components, CF(1) - the catalytic core - and CF(0) - the membrane proton channel. CF(1) has five subunits: alpha(3), beta(3), gamma(1), delta(1), epsilon(1). CF(0) has three main subunits: a(1), b(2) and c(9-12). The alpha and beta chains form an alternating ring which encloses part of the gamma chain. CF(1) is attached to CF(0) by a central stalk formed by the gamma and epsilon chains, while a peripheral stalk is formed by the delta and b chains.

It is found in the cell inner membrane. Key component of the proton channel; it plays a direct role in the translocation of protons across the membrane. This is ATP synthase subunit a from Sinorhizobium medicae (strain WSM419) (Ensifer medicae).